Reading from the N-terminus, the 336-residue chain is HTH-type transcriptional repressor PurR (336 aa).

The region spanning 2-56 is the HTH lacI-type domain; it reads ATIKDVAKMAGVSTTTVSHVINKTRFVAKDTEEAVLSAIKQLNYSPSAVARSLKV. Positions 4–23 form a DNA-binding region, H-T-H motif; it reads IKDVAKMAGVSTTTVSHVIN. Residues 48–56 mediate DNA binding; it reads SAVARSLKV. Positions 73, 188, 190, 219, and 273 each coordinate hypoxanthine.

In terms of assembly, homodimer.

The protein operates within purine metabolism; purine nucleotide biosynthesis [regulation]. Is the main repressor of the genes involved in the de novo synthesis of purine nucleotides, regulating purB, purC, purEK, purF, purHD, purL, purMN and guaBA expression. PurR is allosterically activated to bind its cognate DNA by binding the purine corepressors, hypoxanthine or guanine, thereby effecting transcription repression. The polypeptide is HTH-type transcriptional repressor PurR (Haemophilus influenzae (strain PittGG)).